Reading from the N-terminus, the 365-residue chain is UDP-galactose transporter homolog 1 (365 aa).

Helical transmembrane passes span 42–62 (IIDL…WAVL) and 80–100 (ASLV…YAYL). N-linked (GlcNAc...) asparagine glycosylation is present at asparagine 115. The next 2 helical transmembrane spans lie at 182–202 (YAVV…HAAP) and 206–226 (SGAG…SMLL). N-linked (GlcNAc...) asparagine glycosylation occurs at asparagine 231. 4 consecutive transmembrane segments (helical) span residues 249–269 (VMCG…LTFS), 289–309 (DIVL…QTLE), 315–335 (VLVT…VVWF), and 339–359 (LTLG…FEAW).

It belongs to the nucleotide-sugar transporter family. SLC35B subfamily.

It is found in the endoplasmic reticulum membrane. Functionally, may be involved in specific transport of UDP-Gal from the cytosol to the Golgi lumen. Involved in the maintenance of optimal conditions for the folding of secretory pathway proteins in the endoplasmic reticulum. This chain is UDP-galactose transporter homolog 1 (HUT1), found in Yarrowia lipolytica (strain CLIB 122 / E 150) (Yeast).